The primary structure comprises 282 residues: Heme oxygenase 1, chloroplastic (282 aa).

Residues Met1 to Val54 constitute a chloroplast transit peptide. Position 86 (His86) interacts with heme b.

It belongs to the heme oxygenase family. Widely expressed.

The protein resides in the plastid. Its subcellular location is the chloroplast. The enzyme catalyses heme b + 3 reduced [NADPH--hemoprotein reductase] + 3 O2 = biliverdin IXalpha + CO + Fe(2+) + 3 oxidized [NADPH--hemoprotein reductase] + 3 H2O + H(+). Activated by ascorbate. Its function is as follows. Key enzyme in the synthesis of the chromophore of the phytochrome family of plant photoreceptors. Catalyzes the opening of the heme ring to form the open-chain tetrapyrrole biliverdin IX with the release of iron and carbon monoxide (CO). Produces specifically the biliverdin IX-alpha isomer. Can form complex with heme, is ferredoxin-dependent and its activity is increased in the presence of ascorbate. Plays a role in salt acclimation signaling. May affect the plastid-to-nucleus signaling pathway by perturbing tetrapyrrole synthesis. The plastid-to-nucleus signal plays an important role in the coordinated expression of both nuclear- and chloroplast-localized genes that encode photosynthesis-related proteins. This Arabidopsis thaliana (Mouse-ear cress) protein is Heme oxygenase 1, chloroplastic (HO1).